A 354-amino-acid chain; its full sequence is Protein sex-lethal (354 aa).

The segment at 1–20 is disordered; sequence MYGNNNPGSNNNNGGYPPYG. RRM domains are found at residues 127 to 205 and 213 to 293; these read TNLI…YARP and TNLY…LAQE.

In terms of assembly, part of a complex containing fl(2)d, Sxl and vir. Interacts with nito. Interacts with Unr; cooperates with Sxl to prevent translation of msl-2 transcripts. Interacts with how; promoting nuclear retention of msl-2 transcripts. As to expression, the embryo-specific isoform is not expressed in the pole cells, which are the progenitors of the germline.

The protein resides in the nucleus. Its subcellular location is the cytoplasm. In terms of biological role, sex determination switch protein, which controls sexual development and dosage compensation in females. Sxl protein is only active in females: it is inactive in males throughout development. Acts as a mRNA-binding protein, which specifically binds to a subset of pre-mRNAs and mRNAs and regulates their processing and/or translation. Promotes sexual development by controlling the female-specific alternative splicing of the transformer (tra) pre-mRNA: binds tightly to a characteristic uridine-rich polypyrimidine tract at the non-sex specific 3' splice site in one of the tra introns, preventing the general splicing factor U2AF from binding to this site and forcing it to bind to the female-specific 3' splice site. Acts as an inhibitor of dosage compensation in females by preventing production of msl-2 protein, an essential component of the MSL complex, the complex that mediates X-chromosome dosage compensation. Specifially binds to uridine stretches in both the 5'- and 3'-UTR of msl-2 transcripts. Sxl first acts at the splicing level by promoting retention of an intron in the 5' UTR of msl-2 pre-mRNA. The retained intron contains Sxl-binding sites that are required for subsequent steps of repression: after msl-2 mRNA export into the cytoplasm, Sxl coordinates its translational repression by targeting early steps of translation initiation. Together with how, Sxl also prevents production of msl-2 protein by preventing nuclear export of msl-2 transcripts. The polypeptide is Protein sex-lethal (Drosophila subobscura (Fruit fly)).